Here is a 356-residue protein sequence, read N- to C-terminus: Guanine nucleotide-binding protein alpha-17 subunit (356 aa).

Residue G2 is the site of N-myristoyl glycine attachment. C4 is lipidated: S-palmitoyl cysteine. The region spanning 32-356 is the G-alpha domain; that stretch reads SIVKLLLLGA…QKNLQKAGMM (325 aa). Positions 35–48 are G1 motif; the sequence is KLLLLGAGECGKST. GTP is bound by residues 40–47, 177–183, 202–206, 271–274, and A328; these read GAGECGKS, LYSRVAT, DVGGQ, and NKKD. S47 and T183 together coordinate Mg(2+). Positions 175–183 are G2 motif; it reads DILYSRVAT. A G3 motif region spans residues 198 to 207; the sequence is FRVFDVGGQR. The tract at residues 267–274 is G4 motif; the sequence is ILFMNKKD. The interval 326–331 is G5 motif; sequence TCATDT.

The protein belongs to the G-alpha family. As to quaternary structure, g proteins are composed of 3 units; alpha, beta and gamma. The alpha chain contains the guanine nucleotide binding site. As to expression, expressed in sensory neurons in the head and tail. Expressed in amphid AWC neurons, to a lesser extent in AWB and weakly in AWA, ASH and ADF neurons (head sensory neurons). Expressed in phasmid PHA and PHB neurons (tail sensory neurons).

The protein localises to the cell projection. The protein resides in the cilium. It localises to the dendrite. Its function is as follows. Guanine nucleotide-binding proteins (G proteins) are involved as modulators or transducers in various transmembrane signaling systems. This specific G-alpha subunit plays an important role in olfaction and in cilia morphogenesis. Involved in chemotactic responses to attractants diacetyl, pyrazine, 2,4,5-trimethylthiazole, benzaldehyde, isoamyl alcohol, butanone and 2,3-pentanedione. Displays a redundant function with gpa-3 in chemotactic responses. Plays a role in the avoidance response to the noxious chemical quinine in ASH sensory neurons. Involved in avoidance responses to copper, sodium dodecyl sulfate and linoleic acid. Involved in osmotic avoidance and mechanosensory responses. Involved in specifying fan-like morphology of cilia of head sensory neurons AWC. Plays a role in the detection of preferred food sources by mediating the recognition of food odors in olfactory sensory neurons. This Caenorhabditis elegans protein is Guanine nucleotide-binding protein alpha-17 subunit.